The primary structure comprises 156 residues: Acyl carrier protein, mitochondrial (156 aa).

The N-terminal 68 residues, 1–68 (MASRVLSAYV…GRVTQLCRQY (68 aa)), are a transit peptide targeting the mitochondrion. In terms of domain architecture, Carrier spans 77-152 (EGIQDRVLYV…EIVDYIADKK (76 aa)). Residue lysine 88 is modified to N6-acetyllysine. Serine 112 is modified (O-(pantetheine 4'-phosphoryl)serine).

It belongs to the acyl carrier protein (ACP) family. In terms of assembly, mammalian complex I is composed of 45 different subunits. Interacts with ETFRF1. Identified in a complex composed of MALSU1, MIEF1 upstream open reading frame protein and NDUFAB1; within the trimeric complex, MIEF1 upstream open reading frame protein functions as a bridging scaffold that interacts with MALSU1 on one side, and with NDUFAB1 on the other side. The complex interacts with the mitochondrial large ribosomal subunit. Interacts with alpha-1-microglobulin chain; this interaction is required for the maintenance of mitochondrial redox homeostasis. Component of the mitochondrial core iron-sulfur cluster (ISC) complex composed of NFS1, LYRM4, NDUFAB1, ISCU, FXN, and FDX2; this complex is a heterohexamer containing two copies of each monomer. Component of the cyteine desulfurase complex composed of NFS1, LYRM4 and NDUFAB1; this complex contributes to the stability and cysteine desulfurase activity of NFS1. Post-translationally, phosphopantetheinylation at Ser-112 is essential for interactions with LYR motif-containing proteins.

The protein localises to the mitochondrion. Carrier of the growing fatty acid chain in fatty acid biosynthesis. Accessory and non-catalytic subunit of the mitochondrial membrane respiratory chain NADH dehydrogenase (Complex I), which functions in the transfer of electrons from NADH to the respiratory chain. Accessory protein, of the core iron-sulfur cluster (ISC) assembly complex, that regulates, in association with LYRM4, the stability and the cysteine desulfurase activity of NFS1 and participates in the [2Fe-2S] clusters assembly on the scaffolding protein ISCU. The core iron-sulfur cluster (ISC) assembly complex is involved in the de novo synthesis of a [2Fe-2S] cluster, the first step of the mitochondrial iron-sulfur protein biogenesis. This process is initiated by the cysteine desulfurase complex (NFS1:LYRM4:NDUFAB1) that produces persulfide which is delivered on the scaffold protein ISCU in a FXN-dependent manner. Then this complex is stabilized by FDX2 which provides reducing equivalents to accomplish the [2Fe-2S] cluster assembly. Finally, the [2Fe-2S] cluster is transferred from ISCU to chaperone proteins, including HSCB, HSPA9 and GLRX5. The polypeptide is Acyl carrier protein, mitochondrial (Gorilla gorilla gorilla (Western lowland gorilla)).